A 194-amino-acid polypeptide reads, in one-letter code: uncharacterized protein (194 aa).

Residues 77–92 (QTQPQHQTLSQHLPQT) show a composition bias toward polar residues. Residues 77–96 (QTQPQHQTLSQHLPQTHHTD) are disordered. Residues 169 to 189 (FWEILLLIILIAVLVYGIYWL) traverse the membrane as a helical segment.

Its subcellular location is the host membrane. The protein resides in the virion. This is an uncharacterized protein from Acanthamoeba polyphaga (Amoeba).